Here is a 120-residue protein sequence, read N- to C-terminus: uncharacterized protein (120 aa).

In terms of domain architecture, PRD spans V13–E119.

This is an uncharacterized protein from Escherichia coli (strain K12).